The following is a 100-amino-acid chain: Urease subunit gamma (100 aa).

Belongs to the urease gamma subunit family. As to quaternary structure, heterotrimer of UreA (gamma), UreB (beta) and UreC (alpha) subunits. Three heterotrimers associate to form the active enzyme.

It is found in the cytoplasm. It catalyses the reaction urea + 2 H2O + H(+) = hydrogencarbonate + 2 NH4(+). It participates in nitrogen metabolism; urea degradation; CO(2) and NH(3) from urea (urease route): step 1/1. The sequence is that of Urease subunit gamma from Laribacter hongkongensis (strain HLHK9).